We begin with the raw amino-acid sequence, 645 residues long: 1-deoxy-D-xylulose-5-phosphate synthase (645 aa).

Thiamine diphosphate is bound by residues histidine 83 and 124-126; that span reads GHS. Residue aspartate 155 participates in Mg(2+) binding. Thiamine diphosphate is bound by residues 156-157, asparagine 184, tyrosine 295, and glutamate 376; that span reads GS. Asparagine 184 is a Mg(2+) binding site.

The protein belongs to the transketolase family. DXPS subfamily. Homodimer. Mg(2+) is required as a cofactor. It depends on thiamine diphosphate as a cofactor.

The enzyme catalyses D-glyceraldehyde 3-phosphate + pyruvate + H(+) = 1-deoxy-D-xylulose 5-phosphate + CO2. It functions in the pathway metabolic intermediate biosynthesis; 1-deoxy-D-xylulose 5-phosphate biosynthesis; 1-deoxy-D-xylulose 5-phosphate from D-glyceraldehyde 3-phosphate and pyruvate: step 1/1. Catalyzes the acyloin condensation reaction between C atoms 2 and 3 of pyruvate and glyceraldehyde 3-phosphate to yield 1-deoxy-D-xylulose-5-phosphate (DXP). The polypeptide is 1-deoxy-D-xylulose-5-phosphate synthase (Desulfotalea psychrophila (strain LSv54 / DSM 12343)).